The sequence spans 250 residues: Archaeal flagellar motor scaffold protein FlaX (250 aa).

The Extracellular segment spans residues 1–9; the sequence is MAIQDLLQS. A helical transmembrane segment spans residues 10–30; it reads SLFIILIGVGIPIAAFLEILF. The Cytoplasmic segment spans residues 31 to 250; it reads RVILPKTKRV…MILEGGGVNG (220 aa). The span at 42-61 shows a compositional bias: polar residues; the sequence is TQQSPQNISQEQRFPTQQKP. The tract at residues 42–72 is disordered; that stretch reads TQQSPQNISQEQRFPTQQKPANDETSKYSSD. Over residues 62 to 72 the composition is skewed to basic and acidic residues; it reads ANDETSKYSSD.

In terms of assembly, the S.acidocaldarius archaellum assembly machinery and its filament consist of seven proteins (FlaB, FlaF, FlaG, FlaH, FlaI, FlaJ and FlaX). FlaX assembles into ring-shaped oligomers. Interacts directly with FlaH and the motor ATPase FlaI.

It localises to the archaeal flagellum. Its subcellular location is the cell membrane. With respect to regulation, the presence of the flagellar core components FlaH, FlaI and FlaJ seems to be crucial for the stability of FlaX. In terms of biological role, component of the archaellum. FlaX, FlaH and FlaI form the core cytoplasmic motor complex of the crenarchaeal archaellum. FlaX forms a ring that may act as a membrane-bound cytoplasmic scaffold that guides the assembly of the archaellum motor complex. Is essential for archaellum assembly. The sequence is that of Archaeal flagellar motor scaffold protein FlaX from Sulfolobus acidocaldarius (strain ATCC 33909 / DSM 639 / JCM 8929 / NBRC 15157 / NCIMB 11770).